We begin with the raw amino-acid sequence, 261 residues long: Carnitinyl-CoA dehydratase (261 aa).

Catalysis depends on E111, which acts as the Nucleophile. The active-site Proton acceptor is the E131.

This sequence belongs to the enoyl-CoA hydratase/isomerase family.

The enzyme catalyses (R)-carnitinyl-CoA = crotonobetainyl-CoA + H2O. It participates in amine and polyamine metabolism; carnitine metabolism. Functionally, catalyzes the reversible dehydration of L-carnitinyl-CoA to crotonobetainyl-CoA. This Salmonella paratyphi C (strain RKS4594) protein is Carnitinyl-CoA dehydratase.